A 305-amino-acid polypeptide reads, in one-letter code: GMP synthase [glutamine-hydrolyzing] subunit B (305 aa).

Residues 2-184 (VKTEKFIQKS…LGLPPEIQHR (183 aa)) form the GMPS ATP-PPase domain. Residue 29 to 35 (SGGVDSS) coordinates ATP.

In terms of assembly, heterodimer composed of a glutamine amidotransferase subunit (A) and a GMP-binding subunit (B).

It catalyses the reaction XMP + L-glutamine + ATP + H2O = GMP + L-glutamate + AMP + diphosphate + 2 H(+). It participates in purine metabolism; GMP biosynthesis; GMP from XMP (L-Gln route): step 1/1. In terms of biological role, catalyzes the synthesis of GMP from XMP. The protein is GMP synthase [glutamine-hydrolyzing] subunit B of Methanoregula boonei (strain DSM 21154 / JCM 14090 / 6A8).